Here is an 865-residue protein sequence, read N- to C-terminus: cGMP-specific 3',5'-cyclic phosphodiesterase (865 aa).

A Phosphoserine modification is found at Ser-92. GAF domains lie at 154-304 (DVTA…GIVL) and 336-493 (SLEV…GLGI). The PDEase domain maps to 526–850 (ETRELQSLAA…QKWQALAEQQ (325 aa)). His-603 (proton donor) is an active-site residue. Residues His-607, His-643, Asp-644, and Asp-754 each contribute to the Zn(2+) site. Residue Asp-644 coordinates Mg(2+). A 3',5'-cyclic GMP-binding site is contributed by Gln-807.

Belongs to the cyclic nucleotide phosphodiesterase family. Requires Zn(2+) as cofactor. Mg(2+) is required as a cofactor. In terms of processing, phosphorylation is regulated by binding of cGMP to the two allosteric sites. Phosphorylation by PRKG1 leads to its activation.

It catalyses the reaction 3',5'-cyclic GMP + H2O = GMP + H(+). It functions in the pathway purine metabolism; 3',5'-cyclic GMP degradation; GMP from 3',5'-cyclic GMP: step 1/1. Most potently inhibited by zaprinast and dipyridamole. Functionally, plays a role in signal transduction by regulating the intracellular concentration of cyclic nucleotides. This phosphodiesterase catalyzes the specific hydrolysis of cGMP to 5'-GMP. Specifically regulates nitric-oxide-generated cGMP. The sequence is that of cGMP-specific 3',5'-cyclic phosphodiesterase (PDE5A) from Bos taurus (Bovine).